Reading from the N-terminus, the 593-residue chain is MGESIHGLERSHKCTELSSSNIGEKVTVMGWVQKQRNLGSLVFIDLRDRTGIVQLVFTDKDGEMFDKAKTIRSEYVIATVGTVAARSAEAVNKKMATGEIEIIASELRILSSSETPPMYIEENSDVNEQTRLKYRFLDLRRPDMQRNLILRHRVAKVARDYYDQNGFLEIETPILIKSTPEGARDYLVPSRVHPGKFFALPQSPQLYKQLLMVSGYDRYFQIAKCFRDEDLRADRQPEFTQIDIEMSFVNVDDVLEVNEGFVKKAFKEALGVDVETPFTRMPYAEAMERFGSDKPDIRFGMELVNMSDLVANCGFKVFTDAVAMGGSVRAINAKGCAKFSRKEIDALVDLVKTYKAKGMAWISISQENEIKSSFAKFMSEDEMKAILNRAQAEAGDLICFVADKNNVVFDALGQLRLEIARKLDILNPDEFKFLWVTEFPLFEYDEEDQRWAAKHHPFTSPMDEDLQYLDTDPGRVRAKAYDMVLNGVELGGGSIRIHIQELQAKMFKMLGFTEEDANRKFGFLLEAFKYGTPPHGGMAFGLDRLVMLMAKRNSIRDVIAFPKVQNASCPMSNAPDVVDETQIEELHISIAKE.

E181 contributes to the L-aspartate binding site. Residues 205–208 (QLYK) are aspartate. Residue R227 coordinates L-aspartate. ATP-binding positions include 227-229 (RDE) and Q236. L-aspartate is bound at residue H455. E489 provides a ligand contact to ATP. Position 496 (R496) interacts with L-aspartate. 541 to 544 (GLDR) contacts ATP.

Belongs to the class-II aminoacyl-tRNA synthetase family. Type 1 subfamily. Homodimer.

The protein localises to the cytoplasm. It carries out the reaction tRNA(Asp) + L-aspartate + ATP = L-aspartyl-tRNA(Asp) + AMP + diphosphate. Functionally, catalyzes the attachment of L-aspartate to tRNA(Asp) in a two-step reaction: L-aspartate is first activated by ATP to form Asp-AMP and then transferred to the acceptor end of tRNA(Asp). The sequence is that of Aspartate--tRNA ligase from Ruminiclostridium cellulolyticum (strain ATCC 35319 / DSM 5812 / JCM 6584 / H10) (Clostridium cellulolyticum).